Consider the following 274-residue polypeptide: Copper chaperone for superoxide dismutase (274 aa).

An HMA domain is found at 11–74; that stretch reads ACMLEFAVQM…LLEDTGRQAV (64 aa). Cu cation-binding residues include Cys-22 and Cys-25. A Glycyl lysine isopeptide (Lys-Gly) (interchain with G-Cter in ubiquitin) cross-link involves residue Lys-76. Residues 88 to 234 form a superoxide dismutase-like region; that stretch reads AAVAILGGSG…LACGIIARSA (147 aa). Cys-141 and Cys-227 are oxidised to a cystine. Positions 147, 155, 164, and 167 each coordinate Zn(2+). Glycyl lysine isopeptide (Lys-Gly) (interchain with G-Cter in ubiquitin) cross-links involve residues Lys-189, Lys-216, and Lys-241. Positions 244 and 246 each coordinate Cu cation.

This sequence in the C-terminal section; belongs to the Cu-Zn superoxide dismutase family. As to quaternary structure, homodimer, and heterodimer with SOD1. Interacts with COMMD1. Interacts with XIAP/BIRC4. Interacts with SLC31A1(via C-terminal domain); this interaction is Cu(1+)-mediated. The heterodimer CCS:SOD1 interacts with SLC31A1; this heterotrimer is Cu(1+)-mediated and its maintenance is regulated through SOD1 activation. Cu(2+) is required as a cofactor. The cofactor is Zn(2+). In terms of processing, ubiquitinion by XIAP/BIRC4 leads to enhancement of its chaperone activity toward its physiologic target, SOD1, rather than proteasomal degradation. XIAP/BIRC4 preferentially ubiquitinates at Lys-241.

The protein resides in the cytoplasm. Functionally, delivers copper to copper zinc superoxide dismutase (SOD1). The protein is Copper chaperone for superoxide dismutase of Sus scrofa (Pig).